The following is a 256-amino-acid chain: Major prion protein 2 (256 aa).

A signal peptide spans 1–24 (MVKSHIGSWILVLFVAMWSDVALC). Residues 25-233 (KKRPKPGGGW…ESEAYYQRGA (209 aa)) are interaction with GRB2, ERI3 and SYN1. Residues 28–110 (PKPGGGWNTG…QWNKPSKPKT (83 aa)) form a disordered region. Tandem repeats lie at residues 54–62 (PQEGGDWGQ), 63–70 (PHGGGWGQ), 71–78 (PHVGGWGQ), 79–86 (PHGGGWGQ), and 87–95 (PHGGGGWGQ). The tract at residues 54–95 (PQEGGDWGQPHGGGWGQPHVGGWGQPHGGGWGQPHGGGGWGQ) is 5 X 8 AA tandem repeats of P-H-G-G-G-W-G-Q. The span at 58–99 (GDWGQPHGGGWGQPHVGGWGQPHGGGWGQPHGGGGWGQGGTH) shows a compositional bias: gly residues. Cu(2+) is bound by residues His-64, Gly-65, Gly-66, His-72, Gly-74, His-80, Gly-81, Gly-82, His-88, Gly-90, and Gly-91. Cys-182 and Cys-217 form a disulfide bridge. 2 N-linked (GlcNAc...) asparagine glycosylation sites follow: Asn-184 and Asn-200. Ala-233 carries GPI-anchor amidated alanine lipidation. A propeptide spans 234–256 (SVILFSSPPVILLISFLIFLIVG) (removed in mature form).

It belongs to the prion family. Monomer and homodimer. Has a tendency to aggregate into amyloid fibrils containing a cross-beta spine, formed by a steric zipper of superposed beta-strands. Soluble oligomers may represent an intermediate stage on the path to fibril formation. Copper binding may promote oligomerization. Interacts with GRB2, APP, ERI3/PRNPIP and SYN1. Mislocalized cytosolically exposed PrP interacts with MGRN1; this interaction alters MGRN1 subcellular location and causes lysosomal enlargement. Interacts with KIAA1191.

It is found in the cell membrane. It localises to the golgi apparatus. Its function is as follows. Its primary physiological function is unclear. Has cytoprotective activity against internal or environmental stresses. May play a role in neuronal development and synaptic plasticity. May be required for neuronal myelin sheath maintenance. May play a role in iron uptake and iron homeostasis. Soluble oligomers are toxic to cultured neuroblastoma cells and induce apoptosis (in vitro). Association with GPC1 (via its heparan sulfate chains) targets PRNP to lipid rafts. Also provides Cu(2+) or Zn(2+) for the ascorbate-mediated GPC1 deaminase degradation of its heparan sulfate side chains. This Tragelaphus strepsiceros (Greater kudu) protein is Major prion protein 2.